The primary structure comprises 242 residues: 3-dehydroquinate dehydratase (242 aa).

3-dehydroquinate is bound by residues 39-41 (EVR) and Arg73. The active-site Proton donor/acceptor is the His135. Lys162 functions as the Schiff-base intermediate with substrate in the catalytic mechanism. 3-dehydroquinate contacts are provided by Arg203 and Gln228.

It belongs to the type-I 3-dehydroquinase family. As to quaternary structure, homodimer.

The enzyme catalyses 3-dehydroquinate = 3-dehydroshikimate + H2O. The protein operates within metabolic intermediate biosynthesis; chorismate biosynthesis; chorismate from D-erythrose 4-phosphate and phosphoenolpyruvate: step 3/7. In terms of biological role, involved in the third step of the chorismate pathway, which leads to the biosynthesis of aromatic amino acids. Catalyzes the cis-dehydration of 3-dehydroquinate (DHQ) and introduces the first double bond of the aromatic ring to yield 3-dehydroshikimate. This chain is 3-dehydroquinate dehydratase, found in Methanosarcina acetivorans (strain ATCC 35395 / DSM 2834 / JCM 12185 / C2A).